The chain runs to 374 residues: Fibrous sheath-interacting protein 1 (374 aa).

Disordered regions lie at residues 1 to 80 (MEVY…LEVL), 95 to 120 (EMTD…PEMR), and 225 to 244 (EVGQ…HSKS). Composition is skewed to basic and acidic residues over residues 12–28 (PHSR…RDKS), 45–55 (DIIKGRLDEIS), and 65–77 (ENRR…HRSL). A coiled-coil region spans residues 262–290 (SVFLTQQEKERIEDLLKDLEEELLEEPQL).

The protein belongs to the FSIP1 family.

This chain is Fibrous sheath-interacting protein 1 (fsip1), found in Danio rerio (Zebrafish).